The chain runs to 236 residues: (5-formylfuran-3-yl)methyl phosphate synthase (236 aa).

Catalysis depends on lysine 27, which acts as the Schiff-base intermediate with substrate. Lysine 85 functions as the Proton acceptor in the catalytic mechanism.

The protein belongs to the MfnB family.

The enzyme catalyses 2 D-glyceraldehyde 3-phosphate = 4-(hydroxymethyl)-2-furancarboxaldehyde phosphate + phosphate + 2 H2O. It functions in the pathway cofactor biosynthesis; methanofuran biosynthesis. In terms of biological role, catalyzes the formation of 4-(hydroxymethyl)-2-furancarboxaldehyde phosphate (4-HFC-P) from two molecules of glyceraldehyde-3-P (GA-3-P). The sequence is that of (5-formylfuran-3-yl)methyl phosphate synthase from Methanococcus maripaludis (strain C7 / ATCC BAA-1331).